The chain runs to 818 residues: Lon protease (818 aa).

Residues 14 to 216 (LPVLPLRDVV…KVFALIEREI (203 aa)) form the Lon N-terminal domain. Residue 370 to 377 (GPPGVGKT) participates in ATP binding. One can recognise a Lon proteolytic domain in the interval 605-786 (ESLVGIVTGL…DEVIKVALMH (182 aa)). Catalysis depends on residues Ser692 and Lys735.

It belongs to the peptidase S16 family. In terms of assembly, homohexamer. Organized in a ring with a central cavity.

It localises to the cytoplasm. It catalyses the reaction Hydrolysis of proteins in presence of ATP.. Functionally, ATP-dependent serine protease that mediates the selective degradation of mutant and abnormal proteins as well as certain short-lived regulatory proteins. Required for cellular homeostasis and for survival from DNA damage and developmental changes induced by stress. Degrades polypeptides processively to yield small peptide fragments that are 5 to 10 amino acids long. Binds to DNA in a double-stranded, site-specific manner. The polypeptide is Lon protease (Wolbachia pipientis subsp. Culex pipiens (strain wPip)).